Consider the following 356-residue polypeptide: Tyrosine recombinase XerS (356 aa).

One can recognise a Core-binding (CB) domain in the interval 16-121; sequence LMPWFVLEYY…ALSSLYKYLT (106 aa). Residues 169 to 354 form the Tyr recombinase domain; that stretch reads KFLDYVENEY…VNDEQKNALD (186 aa). Residues R210, K234, H306, R309, and H332 contribute to the active site. The active-site O-(3'-phospho-DNA)-tyrosine intermediate is Y341.

This sequence belongs to the 'phage' integrase family. XerS subfamily.

Its subcellular location is the cytoplasm. Its activity is regulated as follows. FtsK is required for recombination. In terms of biological role, site-specific tyrosine recombinase, which acts by catalyzing the cutting and rejoining of the recombining DNA molecules. Essential to convert dimers of the bacterial chromosome into monomers to permit their segregation at cell division. The polypeptide is Tyrosine recombinase XerS (Streptococcus thermophilus (strain CNRZ 1066)).